The sequence spans 430 residues: MAVFPLSAKHRKYALRALAVSIILVSAAYIALTERTERVRPQRVEQNLPPLSWGGSGVQTAYWVQEAVQPGDSLADVLARSGMARDEIARITEKYGGEADLRHLRADQSVHVLVGGDGGAREVQFFTDEDGERNLVALEKKGGIWRRSASEADMKVLPTLRSVVVKTSARGSLARAEVPVEIRESLSGIFAGRFSLDGLKEGDAVRLIYDSLYFHGQQVAAGDILAAEVVKGGTRHQAFYYRSDKEGGGGGNYYDEDGRVLQEKGGFNIEPLVYTRISSPFGYRMHPILHTWRLHTGIDYAAPQGTPVRASADGVITFKGRKGGYGNAVMIRHANGVETLYAHLSAFSQAQGNVRGGEVIGFVGSTGRSTGPHLHYEARINGQPVNPVSVALPTPELTQADKAAFAAQKQKADALLARLRGIPVTVSQSD.

Zn(2+)-binding residues include H295, D299, and H375.

This sequence belongs to the peptidase M23B family. As to quaternary structure, monomer. Requires Zn(2+) as cofactor. Likely to be synthesized as a proenzyme. The cleavage of the N-terminal domain is probably required for the activation of the enzyme.

The protein localises to the cell outer membrane. In terms of biological role, has both endopeptidase and DD-carboxypeptidase activities. Degrades cell wall peptidoglycan (PG) to allow consummate expression of pili. The sequence is that of DD-carboxypeptidase/endopeptidase Mpg from Neisseria meningitidis serogroup B (strain ATCC 13091 / M2091).